The chain runs to 38 residues: Phi-Lf prophage-derived putative minor coat protein (38 aa).

In Xanthomonas campestris pv. campestris (strain ATCC 33913 / DSM 3586 / NCPPB 528 / LMG 568 / P 25), this protein is Phi-Lf prophage-derived putative minor coat protein (gIX-1).